A 129-amino-acid polypeptide reads, in one-letter code: C-type natriuretic peptide 1 (129 aa).

Residues 1 to 24 (MSYKRGTCLGFIMLLMVSHHHTKG) form the signal peptide. Positions 25–107 (KPLSSLQNLS…SRRYRQRNKK (83 aa)) are excised as a propeptide. The cysteines at positions 113 and 129 are disulfide-linked.

The protein belongs to the natriuretic peptide family.

The protein localises to the secreted. Functionally, hormone which plays a role in endochondral ossification through regulation of cartilaginous growth plate chondrocytes proliferation and differentiation. May also be vasoactive and natriuretic. May be important for freshwater adaptation. In Aquarana catesbeiana (American bullfrog), this protein is C-type natriuretic peptide 1.